The sequence spans 74 residues: Invertase 3 (74 aa).

The signal sequence occupies residues 1–19 (MLLQAFIFLLAGFAAKISA). The N-linked (GlcNAc...) asparagine glycan is linked to N23. Substrate contacts are provided by residues 39 to 42 (WMND) and Q60. D42 is a catalytic residue. An N-linked (GlcNAc...) asparagine glycan is attached at N64.

Belongs to the glycosyl hydrolase 32 family.

It carries out the reaction Hydrolysis of terminal non-reducing beta-D-fructofuranoside residues in beta-D-fructofuranosides.. The protein is Invertase 3 (SUC3) of Saccharomyces cerevisiae (Baker's yeast).